The chain runs to 325 residues: MARPVSERTPAPLLLGGPTGAPPGGGALLGLRSLLQGTSKPKEPTSCLLKEKERKASPPAATVPGPGLETAGPADASAGAVVGGGSPRGRPGAAPGPGLLAPLLWERTLPFGDVEYVDLDAFLLEHGLPPSPPPPGGPSPAPSPVRTPAPSPRPGSCGSASPRSSPGHAPARAALGAAGGHRAGLTSRDTPSPVDPDTVEVLMTFEPDPADLALSSIPGHETFDPRRHRFSEEELKPQPIMKKARKIQVPEEQKDEKYWSRRYKNNEAAKRSRDARRLKENQISVRAAFLEKENALLRQEVVAVRQELSHYRAVLSRYQAQHGAL.

3 disordered regions span residues 1-100, 124-198, and 212-255; these read MARP…PGLL, LEHG…DPDT, and LALS…EQKD. Gly residues predominate over residues 17–28; that stretch reads GPTGAPPGGGAL. Low complexity-rich tracts occupy residues 29-38 and 71-80; these read LGLRSLLQGT and AGPADASAGA. A Phosphoserine modification is found at Ser86. Residues 88 to 100 are compositionally biased toward low complexity; the sequence is RGRPGAAPGPGLL. Residues 129 to 153 are compositionally biased toward pro residues; the sequence is PPSPPPPGGPSPAPSPVRTPAPSPR. Positions 166–176 are enriched in low complexity; it reads PGHAPARAALG. A compositionally biased stretch (basic and acidic residues) spans 221–236; that stretch reads ETFDPRRHRFSEEELK. Positions 255 to 318 constitute a bZIP domain; that stretch reads DEKYWSRRYK…SHYRAVLSRY (64 aa). The tract at residues 257–279 is basic motif; it reads KYWSRRYKNNEAAKRSRDARRLK. The leucine-zipper stretch occupies residues 283-297; sequence ISVRAAFLEKENALL.

Belongs to the bZIP family. PAR subfamily. As to quaternary structure, binds DNA as a homodimer or a heterodimer. Can form a heterodimer with TEF.

It is found in the nucleus. Its function is as follows. This transcriptional activator recognizes and binds to the sequence 5'-RTTAYGTAAY-3' found in the promoter of genes such as albumin, CYP2A4 and CYP2A5. It is not essential for circadian rhythm generation, but modulates important clock output genes. May be a direct target for regulation by the circadian pacemaker component clock. May affect circadian period and sleep regulation. The protein is D site-binding protein (DBP) of Bos taurus (Bovine).